A 457-amino-acid polypeptide reads, in one-letter code: MALWGGRFSQAADQRFKQLNDSLRFDYRLAEQDIVGSVAWSKALVTVNVLTAAEQQQLEQALNGLLAEVQADPQAIVSSDAEDIHSWVEQKLIDQVGDLGKKLHTGRSRNDQVATDLKLWCKQQIGELHQAIVQLQQALVETAEANQDAVMPGYTHLQRAQPVTFAHWCLAYVEMLARDESRLQDTLKRLDVSPLGSGALAGTAYPIDREQLAGWLGFASATRNSLDSVSDRDHVLELLSNASISMVHLSRFAEDLIFFNSGEAAFVDLSDRVTSGSSLMPQKKNPDALELIRGKCGRVQGALTGMMMTLKGLPLAYNKDMQEDKEGLFDALDTWMDCLQMAALVLDGIQVKRPRCKEAAEQGYANSTELADYLVAKGVPFREAHHIVGEAVVEAIRQGKALEALPLTDLQKFSAVIGDDVYPILALQSCLDKRSAKGGVSPQQVASAIAAAKQRLA.

Belongs to the lyase 1 family. Argininosuccinate lyase subfamily.

Its subcellular location is the cytoplasm. The catalysed reaction is 2-(N(omega)-L-arginino)succinate = fumarate + L-arginine. It functions in the pathway amino-acid biosynthesis; L-arginine biosynthesis; L-arginine from L-ornithine and carbamoyl phosphate: step 3/3. This is Argininosuccinate lyase from Serratia proteamaculans (strain 568).